Here is a 601-residue protein sequence, read N- to C-terminus: Beta-phellandrene synthase (601 aa).

The N-terminal 35 residues, 1–35 (MSTISIHHVGILRNPLPSKNKRALINNPWSLSLPR), are a transit peptide targeting the chloroplast. Mn(2+)-binding residues include Asp356 and Asp360. A DDXXD motif motif is present at residues 356–360 (DDVYD). Homodimerization stretches follow at residues 362-368 (YGTLDEL) and 434-471 (EAKWYESGYTPSLEEYLNNAGFSIGVIPIVVALELSIP). Positions 499 and 507 each coordinate Mn(2+).

Belongs to the terpene synthase family. As to quaternary structure, homodimer. Mn(2+) is required as a cofactor. The cofactor is Mg(2+). In terms of tissue distribution, expressed in peltate glandular trichomes. Present at low levels in flowers, leaves and stems.

It localises to the plastid. Its subcellular location is the chloroplast. It carries out the reaction (2E)-geranyl diphosphate = beta-phellandrene + diphosphate. The enzyme catalyses (2E)-geranyl diphosphate = (1R,5R)-sabinene + diphosphate. The protein operates within secondary metabolite biosynthesis; terpenoid biosynthesis. Its function is as follows. Involved in the biosynthesis of phenolic monoterpenes natural products. Monoterpene synthase that catalyzes mainly the formation of olefins such as sabinene and beta-phellandrene, and minor amounts of other monoterpenes (e.g. myrcene, gamma-terpinene, alpha-thujene and alpha-pinene) from geranyl diphosphate (GPP). The polypeptide is Beta-phellandrene synthase (Origanum vulgare (Wild marjoram)).